The chain runs to 127 residues: Ribonuclease P protein component (127 aa).

The interval 99 to 127 (ALSASLRQQLRDGIDRSARRQEPAAERQR) is disordered. Basic and acidic residues predominate over residues 107-127 (QLRDGIDRSARRQEPAAERQR).

Belongs to the RnpA family. Consists of a catalytic RNA component (M1 or rnpB) and a protein subunit.

It catalyses the reaction Endonucleolytic cleavage of RNA, removing 5'-extranucleotides from tRNA precursor.. Functionally, RNaseP catalyzes the removal of the 5'-leader sequence from pre-tRNA to produce the mature 5'-terminus. It can also cleave other RNA substrates such as 4.5S RNA. The protein component plays an auxiliary but essential role in vivo by binding to the 5'-leader sequence and broadening the substrate specificity of the ribozyme. This is Ribonuclease P protein component from Mycobacteroides abscessus (strain ATCC 19977 / DSM 44196 / CCUG 20993 / CIP 104536 / JCM 13569 / NCTC 13031 / TMC 1543 / L948) (Mycobacterium abscessus).